The sequence spans 95 residues: Large ribosomal subunit protein bL25 (95 aa).

This sequence belongs to the bacterial ribosomal protein bL25 family. As to quaternary structure, part of the 50S ribosomal subunit; part of the 5S rRNA/L5/L18/L25 subcomplex. Contacts the 5S rRNA. Binds to the 5S rRNA independently of L5 and L18.

This is one of the proteins that binds to the 5S RNA in the ribosome where it forms part of the central protuberance. The chain is Large ribosomal subunit protein bL25 from Tolumonas auensis (strain DSM 9187 / NBRC 110442 / TA 4).